The chain runs to 271 residues: Small ribosomal subunit protein uS2 (271 aa).

The span at lysine 229 to lysine 242 shows a compositional bias: basic and acidic residues. Positions lysine 229–glutamate 271 are disordered. The span at alanine 243–glutamate 271 shows a compositional bias: low complexity.

It belongs to the universal ribosomal protein uS2 family.

The sequence is that of Small ribosomal subunit protein uS2 from Nitratidesulfovibrio vulgaris (strain DSM 19637 / Miyazaki F) (Desulfovibrio vulgaris).